The following is a 502-amino-acid chain: MSIRAEEISALIKQQIENYQSEIEVSDVGTVIQVGDGIARAHGLDNVMAGELVEFSNGVMGLAQNLEENNVGIIILGPYTEIREGDEVRRTGRIMQVPVGKELIGRVVNPLGQPVDGLGPINTTNTRPIESPAPGVMDRKSVHEPLQTGIKAIDALVPIGRGQRELIIGDRQTGKTAVALDTIINQKDEDMICIYVAIGQKESTVRNVVETLRKHGALDYTIVVTASASQPAPLLYLAPYAGVTMGEEFMYNGKHVLVVYDDLSKQAAAYRELSLLLRRPPGREAYPGDVFYLHSRLLERAAKLSDARGGGSLTALPFIETQAGDVSAYIPTNVISITDGQIFLQSDLFFSGVRPAIDAGTSVSRVGGSAQIKAMSKVSGTLRLDLASYRELEAFAQFGSDLDKATQAKLNRGARTVEVLKQGLHKPLRVEKQVIILYALTRGFLDDIPVVDITRFEEEFHAWLDSNATDLLSEIRTTKKLADDDKFAAAINGFKKVFVASE.

The interval 115–135 (VDGLGPINTTNTRPIESPAPG) is disordered. 169 to 176 (GDRQTGKT) is a binding site for ATP.

The protein belongs to the ATPase alpha/beta chains family. In terms of assembly, F-type ATPases have 2 components, CF(1) - the catalytic core - and CF(0) - the membrane proton channel. CF(1) has five subunits: alpha(3), beta(3), gamma(1), delta(1), epsilon(1). CF(0) has three main subunits: a(1), b(2) and c(9-12). The alpha and beta chains form an alternating ring which encloses part of the gamma chain. CF(1) is attached to CF(0) by a central stalk formed by the gamma and epsilon chains, while a peripheral stalk is formed by the delta and b chains.

It is found in the cell membrane. It catalyses the reaction ATP + H2O + 4 H(+)(in) = ADP + phosphate + 5 H(+)(out). In terms of biological role, produces ATP from ADP in the presence of a proton gradient across the membrane. The alpha chain is a regulatory subunit. The chain is ATP synthase subunit alpha from Bacillus mycoides (strain KBAB4) (Bacillus weihenstephanensis).